Here is a 457-residue protein sequence, read N- to C-terminus: Fibrinogen C domain-containing protein 1-B (457 aa).

Residues 1–21 form a disordered region; that stretch reads MGSDRWKNIRGTPQMEDSVQE. Residues 1-33 are Cytoplasmic-facing; sequence MGSDRWKNIRGTPQMEDSVQEKSQRKGCGYILC. The chain crosses the membrane as a helical; Signal-anchor for type II membrane protein span at residues 34 to 54; it reads TVLLSVAVLLAVTVTGAVLFM. Over 55-457 the chain is Extracellular; it reads NQYHAPSTEP…MKIRPQREEN (403 aa). The region spanning 231-454 is the Fibrinogen C-terminal domain; that stretch reads CANGSKPRDC…FTEMKIRPQR (224 aa). The N-linked (GlcNAc...) asparagine glycan is linked to Asn233. Cys240 and Cys269 are disulfide-bonded. A glycan (N-linked (GlcNAc...) asparagine) is linked at Asn336. Positions 389 and 391 each coordinate Ca(2+). A disulfide bridge links Cys397 with Cys410.

Homotetramer; disulfide-linked.

The protein localises to the membrane. Its function is as follows. Acetyl group-binding receptor which shows a calcium-dependent binding to acetylated structures such as chitin, some N-acetylated carbohydrates, and amino acids. The chain is Fibrinogen C domain-containing protein 1-B (fibcd1-b) from Xenopus laevis (African clawed frog).